Consider the following 51-residue polypeptide: UPF0181 protein HAPS_0710 (51 aa).

Belongs to the UPF0181 family.

The chain is UPF0181 protein HAPS_0710 from Glaesserella parasuis serovar 5 (strain SH0165) (Haemophilus parasuis).